The sequence spans 317 residues: tRNA dimethylallyltransferase (317 aa).

An ATP-binding site is contributed by G14 to T21. A substrate-binding site is contributed by T16–T21. Interaction with substrate tRNA stretches follow at residues D39–L42 and Q163–R167.

It belongs to the IPP transferase family. In terms of assembly, monomer. It depends on Mg(2+) as a cofactor.

It catalyses the reaction adenosine(37) in tRNA + dimethylallyl diphosphate = N(6)-dimethylallyladenosine(37) in tRNA + diphosphate. In terms of biological role, catalyzes the transfer of a dimethylallyl group onto the adenine at position 37 in tRNAs that read codons beginning with uridine, leading to the formation of N6-(dimethylallyl)adenosine (i(6)A). This chain is tRNA dimethylallyltransferase, found in Stenotrophomonas maltophilia (strain K279a).